An 811-amino-acid chain; its full sequence is Actin filament-associated protein 1-like 2 (811 aa).

2 disordered regions span residues 67 to 110 (KEAQ…PPPK) and 132 to 168 (EPYN…QQHQ). Residues 181–277 (DAMICAFLWR…WLKVIQDISG (97 aa)) enclose the PH 1 domain. The disordered stretch occupies residues 294–326 (QRQIHPKAEGTDRHSGASESGSSTDGHPETPEI). Over residues 299–309 (PKAEGTDRHSG) the composition is skewed to basic and acidic residues. The region spanning 359-453 (ALETSNYLNV…WLGLLLLESG (95 aa)) is the PH 2 domain. Disordered stretches follow at residues 500-532 (RGQR…GEAE) and 558-631 (LGSP…KERV). 3 stretches are compositionally biased toward basic and acidic residues: residues 521-532 (DEPKSEEKGEAE), 566-577 (VSGKKDNEESER), and 622-631 (RLEKSNKERV). Residues 642–737 (LLGKNRTEAE…KENLRKAELG (96 aa)) adopt a coiled-coil conformation.

In terms of assembly, interacts with src.

Its subcellular location is the cytoplasm. Functionally, may play a role in a signaling cascade by enhancing the kinase activity of src. Contributes to src-regulated transcription activation. The polypeptide is Actin filament-associated protein 1-like 2 (afap1l2) (Xenopus laevis (African clawed frog)).